Here is an 883-residue protein sequence, read N- to C-terminus: Protein P (883 aa).

The tract at residues 1–183 (MHPFSRLFRN…GKPYSWEHRQ (183 aa)) is terminal protein domain (TP). Residues 184-386 (LVQHNGQQHK…YCIHHIVSSL (203 aa)) are spacer. A disordered region spans residues 298 to 344 (RNSGHTTWFSSASNSNKSRSREKAYSSNSTSKRYSPPLNYEKSDFSS). Residues 387–728 (DDWGPCTVTG…YEELWPVVRQ (342 aa)) form a polymerase/reverse transcriptase domain (RT) region. The region spanning 397 to 638 (DVTIKSPRTP…NHLHFMGYVI (242 aa)) is the Reverse transcriptase domain. 3 residues coordinate Mg(2+): aspartate 469, aspartate 589, and aspartate 590.

It belongs to the hepadnaviridae P protein family.

The enzyme catalyses DNA(n) + a 2'-deoxyribonucleoside 5'-triphosphate = DNA(n+1) + diphosphate. It carries out the reaction Endonucleolytic cleavage to 5'-phosphomonoester.. Activated by host HSP70 and HSP40 in vitro to be able to bind the epsilon loop of the pgRNA. Because deletion of the RNase H region renders the protein partly chaperone-independent, the chaperones may be needed indirectly to relieve occlusion of the RNA-binding site by this domain. Inhibited by several reverse-transcriptase inhibitors: Lamivudine, Adefovir and Entecavir. Functionally, multifunctional enzyme that converts the viral RNA genome into dsDNA in viral cytoplasmic capsids. This enzyme displays a DNA polymerase activity that can copy either DNA or RNA templates, and a ribonuclease H (RNase H) activity that cleaves the RNA strand of RNA-DNA heteroduplexes in a partially processive 3'- to 5'-endonucleasic mode. Neo-synthesized pregenomic RNA (pgRNA) are encapsidated together with the P protein, and reverse-transcribed inside the nucleocapsid. Initiation of reverse-transcription occurs first by binding the epsilon loop on the pgRNA genome, and is initiated by protein priming, thereby the 5'-end of (-)DNA is covalently linked to P protein. Partial (+)DNA is synthesized from the (-)DNA template and generates the relaxed circular DNA (RC-DNA) genome. After budding and infection, the RC-DNA migrates in the nucleus, and is converted into a plasmid-like covalently closed circular DNA (cccDNA). The activity of P protein does not seem to be necessary for cccDNA generation, and is presumably released from (+)DNA by host nuclear DNA repair machinery. This chain is Protein P, found in Woodchuck hepatitis B virus (isolate 2) (WHV).